The chain runs to 227 residues: Prolactin (227 aa).

Positions 1-28 are cleaved as a signal peptide; sequence MNIKGSPWKGSLLLLLVSNLLLCQSVAP. A disulfide bridge links C32 with C39. Phosphoserine is present on S54. N-linked (GlcNAc...) asparagine; partial glycosylation is present at N59. A phosphoserine mark is found at S62, S118, S163, and S194. 2 disulfides stabilise this stretch: C86-C202 and C219-C227.

Belongs to the somatotropin/prolactin family. As to quaternary structure, interacts with PRLR.

Its subcellular location is the secreted. Functionally, prolactin acts primarily on the mammary gland by promoting lactation. The polypeptide is Prolactin (PRL) (Homo sapiens (Human)).